The chain runs to 422 residues: Hexuronate transporter (422 aa).

11 helical membrane-spanning segments follow: residues 9-29 (VILF…ALSI), 45-65 (MGLI…LGGV), 82-102 (VWSL…LLII), 141-161 (TPLG…AFSW), 163-183 (VSFV…FKFV), 219-239 (LFTA…LTWF), 256-276 (VITV…GFVS), 294-314 (VVLV…GLVA), 321-341 (TLVA…WAVI), 356-376 (FMHF…GFIV), and 381-401 (TFSG…LAVI).

The protein belongs to the major facilitator superfamily. Phthalate permease family.

Its subcellular location is the cell membrane. The catalysed reaction is aldehydo-D-glucuronate(in) + H(+)(in) = aldehydo-D-glucuronate(out) + H(+)(out). It carries out the reaction aldehydo-D-galacturonate(out) + H(+)(out) = aldehydo-D-galacturonate(in) + H(+)(in). In terms of biological role, transport of aldohexuronates such as D-glucuronate and D-galacturonate. The sequence is that of Hexuronate transporter from Bacillus subtilis (strain 168).